A 662-amino-acid polypeptide reads, in one-letter code: Acyl-coenzyme A oxidase acox-1.4 (662 aa).

FAD is bound by residues 148 to 151 (YAQT), 156 to 157 (GT), and G190. Residues 284-287 (KVNH) and R294 each bind substrate. FAD is bound by residues R319 and 339-342 (QQHR). H341, S391, H395, and Q403 together coordinate ATP. G410 contributes to the FAD binding site. 432–433 (YE) is a binding site for substrate. E433 acts as the Proton acceptor in catalysis. Position 435 (E435) interacts with FAD. Residues 526-529 (RASR) and Y574 contribute to the ATP site. Residues 660–662 (AKL) carry the Microbody targeting signal motif.

Belongs to the acyl-CoA oxidase family. In terms of assembly, homodimer. FAD is required as a cofactor.

It localises to the peroxisome. The catalysed reaction is asc-C9-CoA + O2 = asc-DeltaC9-CoA + H2O2. It participates in lipid metabolism; peroxisomal fatty acid beta-oxidation. Its activity is regulated as follows. Activated by ATP. ATP binding leads to a conformational change that promotes FAD cofactor binding and enzyme activity. ATP binding likely occurs during acox-1.4 folding and/or dimer formation. Its function is as follows. Involved in the first step of peroxisomal beta-oxidation by catalyzing the desaturation of fatty acid-derived side chains of ascaroside pheromones, which regulates development and behavior. Specifically, shortens ascarosides with a 9-carbon side chain (asc-C9) and, in association with acox-1.1, may contribute to the shortening of ascarosides with a 11-carbon side chain (asc-C11). May contribute to the production of indol-3-carbonyl(IC)-ascarosides in association with acox-1.1 and acox-3. The chain is Acyl-coenzyme A oxidase acox-1.4 from Caenorhabditis elegans.